We begin with the raw amino-acid sequence, 303 residues long: Sulfate adenylyltransferase subunit 2 (303 aa).

The protein belongs to the PAPS reductase family. CysD subfamily. As to quaternary structure, heterodimer composed of CysD, the smaller subunit, and CysN.

It catalyses the reaction sulfate + ATP + H(+) = adenosine 5'-phosphosulfate + diphosphate. It participates in sulfur metabolism; hydrogen sulfide biosynthesis; sulfite from sulfate: step 1/3. In terms of biological role, with CysN forms the ATP sulfurylase (ATPS) that catalyzes the adenylation of sulfate producing adenosine 5'-phosphosulfate (APS) and diphosphate, the first enzymatic step in sulfur assimilation pathway. APS synthesis involves the formation of a high-energy phosphoric-sulfuric acid anhydride bond driven by GTP hydrolysis by CysN coupled to ATP hydrolysis by CysD. The polypeptide is Sulfate adenylyltransferase subunit 2 (Sulfurovum sp. (strain NBC37-1)).